The sequence spans 472 residues: Serine/threonine-protein kinase ULK3 (472 aa).

The Protein kinase domain maps to 14–270; the sequence is FILTERLGSG…FQDFFAHPWV (257 aa). Residues 20 to 28 and Lys-44 contribute to the ATP site; that span reads LGSGTYATV. Asp-137 serves as the catalytic Proton acceptor. Position 176 is a phosphoserine (Ser-176). Residues 280-348 form the MIT 1 domain; that stretch reads SLGRATALVV…SRAEELKAIV (69 aa). 4 positions are modified to phosphoserine; by autocatalysis: Ser-300, Ser-350, Ser-384, and Ser-464. Residues 375-444 form the MIT 2 domain; it reads RLLAALEVAS…ARAEYLKEQV (70 aa).

It belongs to the protein kinase superfamily. Ser/Thr protein kinase family. APG1/unc-51/ULK1 subfamily. In terms of assembly, interacts (via protein kinase domain) with SUFU. In terms of processing, autophosphorylated. Autophosphorylation is blocked by interaction with SUFU. In terms of tissue distribution, widely expressed. Highest levels observed in fetal brain. In adult tissues, high levels in brain, liver and kidney, moderate levels in testis and adrenal gland and low levels in heart, lung, stomach, thymus, prostate and placenta. In the brain, highest expression in the hippocampus, high levels also detected in the cerebellum, olfactory bulb and optic nerve. In the central nervous system, lowest levels in the spinal cord.

The protein localises to the cytoplasm. It catalyses the reaction L-seryl-[protein] + ATP = O-phospho-L-seryl-[protein] + ADP + H(+). The catalysed reaction is L-threonyl-[protein] + ATP = O-phospho-L-threonyl-[protein] + ADP + H(+). In terms of biological role, serine/threonine protein kinase that acts as a regulator of Sonic hedgehog (SHH) signaling and autophagy. Acts as a negative regulator of SHH signaling in the absence of SHH ligand: interacts with SUFU, thereby inactivating the protein kinase activity and preventing phosphorylation of GLI proteins (GLI1, GLI2 and/or GLI3). Positively regulates SHH signaling in the presence of SHH: dissociates from SUFU, autophosphorylates and mediates phosphorylation of GLI2, activating it and promoting its nuclear translocation. Phosphorylates in vitro GLI2, as well as GLI1 and GLI3, although less efficiently. Also acts as a regulator of autophagy: following cellular senescence, able to induce autophagy. In Homo sapiens (Human), this protein is Serine/threonine-protein kinase ULK3 (ULK3).